A 344-amino-acid polypeptide reads, in one-letter code: Uroporphyrinogen decarboxylase (344 aa).

Substrate-binding positions include 26–30 (RQAGR), Asp-76, Tyr-151, Ser-206, and His-321.

The protein belongs to the uroporphyrinogen decarboxylase family. In terms of assembly, homodimer.

The protein localises to the cytoplasm. The enzyme catalyses uroporphyrinogen III + 4 H(+) = coproporphyrinogen III + 4 CO2. Its pathway is porphyrin-containing compound metabolism; protoporphyrin-IX biosynthesis; coproporphyrinogen-III from 5-aminolevulinate: step 4/4. Catalyzes the decarboxylation of four acetate groups of uroporphyrinogen-III to yield coproporphyrinogen-III. This is Uroporphyrinogen decarboxylase from Sinorhizobium fredii (strain NBRC 101917 / NGR234).